We begin with the raw amino-acid sequence, 729 residues long: Methionine--tRNA ligase (729 aa).

Residues Pro12 to Asn22 carry the 'HIGH' region motif. 4 residues coordinate Zn(2+): Cys143, Cys146, Cys155, and Cys158. The 'KMSKS' region signature appears at Lys330–Ser334. Lys333 provides a ligand contact to ATP. Positions Phe565–Ile670 constitute a tRNA-binding domain.

The protein belongs to the class-I aminoacyl-tRNA synthetase family. MetG type 1 subfamily. Homodimer. It depends on Zn(2+) as a cofactor.

The protein resides in the cytoplasm. The catalysed reaction is tRNA(Met) + L-methionine + ATP = L-methionyl-tRNA(Met) + AMP + diphosphate. In terms of biological role, is required not only for elongation of protein synthesis but also for the initiation of all mRNA translation through initiator tRNA(fMet) aminoacylation. In Borrelia hermsii (strain HS1 / DAH), this protein is Methionine--tRNA ligase.